A 137-amino-acid polypeptide reads, in one-letter code: MLVPKRVKFRRVHRGHMRGEAKGGKTVAFGEFGLQATTSSWITNRQIEAARIAMTRYMKRGGKVWIKIFPHKSYTSKGVGVRMGNGKGAPEGWVEPVKRGKVMFEVGGVPEATAREALRLAQHKLPVRTKIIAREAE.

This sequence belongs to the universal ribosomal protein uL16 family. In terms of assembly, part of the 50S ribosomal subunit.

In terms of biological role, binds 23S rRNA and is also seen to make contacts with the A and possibly P site tRNAs. The sequence is that of Large ribosomal subunit protein uL16 from Leuconostoc citreum (strain KM20).